The chain runs to 186 residues: Elongation factor P (186 aa).

Belongs to the elongation factor P family.

The protein resides in the cytoplasm. The protein operates within protein biosynthesis; polypeptide chain elongation. Its function is as follows. Involved in peptide bond synthesis. Stimulates efficient translation and peptide-bond synthesis on native or reconstituted 70S ribosomes in vitro. Probably functions indirectly by altering the affinity of the ribosome for aminoacyl-tRNA, thus increasing their reactivity as acceptors for peptidyl transferase. The chain is Elongation factor P from Crocosphaera subtropica (strain ATCC 51142 / BH68) (Cyanothece sp. (strain ATCC 51142)).